The sequence spans 570 residues: E3 ubiquitin-protein ligase ZFP91 (570 aa).

Residues 1–12 (MPGETEEPRPPE) show a composition bias toward basic and acidic residues. The disordered stretch occupies residues 1-306 (MPGETEEPRP…PRLPKRRKKP (306 aa)). Composition is skewed to low complexity over residues 31–43 (QRPP…APAG) and 59–68 (AAAAAAAAAV). Positions 69–82 (SRRRKAEYPRRRRS) are enriched in basic residues. Phosphoserine is present on residues Ser83 and Ser103. Residues 94-104 (QQPQAAKSPSP) are compositionally biased toward polar residues. Positions 119–128 (VTTDKDPKEE) are enriched in basic and acidic residues. Residues 207 to 223 (SEEEEEEEEEMLISEEE) show a composition bias toward acidic residues. 2 stretches are compositionally biased toward basic and acidic residues: residues 224-245 (IPFK…ETPK) and 252-269 (KVKE…VEVE). Positions 270 to 282 (VKEEENEIREDEE) are enriched in acidic residues. C2H2-type zinc fingers lie at residues 311–336 (VRCE…KYQH), 342–366 (YVCP…AKHH), 372–394 (YICE…RMIH), 400–422 (LQCE…MKKH), and 430–453 (FSCN…AKSH). An interaction with MAP3K14/NIK region spans residues 338–368 (LKKKYVCPHPSCGRLFRLQKQLLRHAKHHTD).

Belongs to the krueppel C2H2-type zinc-finger protein family. As to quaternary structure, interacts with MAP3K14/NIK. Expressed ubiquitously, particularly at high level in testis. Isoform 2 is testis specific.

The protein localises to the nucleus. It carries out the reaction S-ubiquitinyl-[E2 ubiquitin-conjugating enzyme]-L-cysteine + [acceptor protein]-L-lysine = [E2 ubiquitin-conjugating enzyme]-L-cysteine + N(6)-ubiquitinyl-[acceptor protein]-L-lysine.. It participates in protein modification; protein ubiquitination. In terms of biological role, atypical E3 ubiquitin-protein ligase that mediates 'Lys-63'-linked ubiquitination of MAP3K14/NIK, leading to stabilize and activate MAP3K14/NIK. It thereby acts as an activator of the non-canonical NF-kappa-B2/NFKB2 pathway. May also play an important role in cell proliferation and/or anti-apoptosis. This chain is E3 ubiquitin-protein ligase ZFP91 (ZFP91), found in Homo sapiens (Human).